The primary structure comprises 431 residues: FAD-dependent monooxygenase nodY1 (431 aa).

A signal peptide spans 1–21 (MASTGVSVIVVGLGLAGLTTA). Residues E35 and R110 each coordinate FAD. The active site involves R188. Residue D313 coordinates FAD.

Belongs to the paxM FAD-dependent monooxygenase family. FAD serves as cofactor.

The protein operates within secondary metabolite biosynthesis. Its function is as follows. FAD-dependent monooxygenase; part of the gene cluster that mediates the biosynthesis of the indole diterpenes nodulisporic acids (NA). Nodulisporic acid A (NAA) and its chemically modified derivatives are of particular significance because of their highly potent insecticidal activity against blood-feeding arthropods and lack of observable adverse effects on mammals, in particular the tremogenicity associated with the paspaline-derived IDTs is not observed. The geranylgeranyl diphosphate (GGPP) synthase ggs1, localized outside of the cluster, is proposed to catalyze the first step in nodulisporic acid biosynthesis via conversion of farnesyl pyrophosphate and isopentyl pyrophosphate into geranylgeranyl pyrophosphate (GGPP). Condensation of indole-3-glycerol phosphate with GGPP by the prenyl transferase nodC then forms 3-geranylgeranylindole (3-GGI). Epoxidation by the FAD-dependent monooxygenase nodM leads to a single-epoxidized-GGI that is substrate of the terpene cyclase nodB for cyclization to yield emindole SB. The terminal methyl carbon, C28, of emindole SB is then oxidized by the cytochrome P450 monooxygenase nodW to produce nodulisporic acid F (NAF), the pentacyclic core of NAA. NAF is converted to nodulisporic acid E (NAE) via prenylation. This step is probably performed by one of the indole diterpene prenyltransferases nodD1 or nodD2. Several oxidation steps performed by the FAD-linked oxidoreductase nodO and one of the cytochrome P450 monooxygenase nodR, nodX or nodZ further convert NAE to nodulisporic acid D (NAD). NAD is substrate of cytochrome P450 monooxygenase nodJ to produce the precursor of nodulisporic acid C (NAC), converted to NAC by one of the indole diterpene prenyltransferases nodD1 or nodD2. The FAD-dependent monooxygenase nodY2 then oxidizes NAC to nodulisporic acid B (NAB). Finally NAB is converted to NAA by one of the cytochrome P450 monooxygenases nodR, nodX or nodZ. The chain is FAD-dependent monooxygenase nodY1 from Hypoxylon pulicicidum.